A 154-amino-acid polypeptide reads, in one-letter code: MAKKPVKDLKQLGHATPVPASPEEATLERVPNPHPDANYVARFTVPEFTSLCPVTGQPDFAHLVIDYVPGKWLIESKSLKLYLQSFRNHGAFHEDCTLAIGKRLAGTLAPKWLRIGGYWYPRGGIPIDVFWQKGKLPAGVWVPDQGVAPYRGRG.

The segment covering 1-11 (MAKKPVKDLKQ) has biased composition (basic and acidic residues). Positions 1–31 (MAKKPVKDLKQLGHATPVPASPEEATLERVP) are disordered. The Thioimide intermediate role is filled by Cys52. The active-site Proton donor is Asp59. Residues 74–76 (IES) and 93–94 (HE) each bind substrate.

It belongs to the GTP cyclohydrolase I family. QueF type 1 subfamily.

The protein localises to the cytoplasm. It catalyses the reaction 7-aminomethyl-7-carbaguanine + 2 NADP(+) = 7-cyano-7-deazaguanine + 2 NADPH + 3 H(+). It participates in tRNA modification; tRNA-queuosine biosynthesis. In terms of biological role, catalyzes the NADPH-dependent reduction of 7-cyano-7-deazaguanine (preQ0) to 7-aminomethyl-7-deazaguanine (preQ1). This Parvibaculum lavamentivorans (strain DS-1 / DSM 13023 / NCIMB 13966) protein is NADPH-dependent 7-cyano-7-deazaguanine reductase.